The primary structure comprises 894 residues: MMMNSTIRQGWQQVLRRFSIPASGDRLIVSNSTDQPIGLFGAFDTSLQTLSQVTNDPEILKQKSNIPTHLDIASVLETSPRSFPWVFLTNSFCTFGGSIHAQNLQAFATAEFKSGFCYMNLLIPLSFDIIDAHADSFRGFVEQLPDTLGAYPSLSMVLNVMLHAATRFPEIVASPVPTIAFDAESLQFHVTDKRGVPGMWNILKACRVYELLSLAADGIGCEYMLYPVGAAPQYSFWKKSMDHFISDRFVEFLAMQGLLASALEQDYKTHDARDALLTALQNAGYTNVVARERRFPNGHDPSTVWLNLNEAPISEKLTELKRYLLVGHRSDEIADITHNVHQHVFEVLKTMSVQFSKTTNAYNRARFEVNHEVIWNAEYGRSSQQNAELEALVLFLNRQSLEIENILRRTTSPVVVTNWQPDVPPAAPEISEGEPTHAVATPITEAPTHATPVEVVNLPPTRSYWAETLVGVLTAILGTIFALLTRALIRPKRLRRKSTFPWVSLDSGDEDDDHSGGGGGSPQTPGGQPPASPAPGTHQSRFSVQDIASDTSLLSVDLDEDTLSQYDETFQTIRRALFENSFGDILQNSARWISTLEAMALADGNAPYTLLAQYLNGIEEAYTNFRNTGHISRATLSGFFVLEDSLRAAGIAFGGTTPTQTIQNQSADSPARRWKTRFEQIACELGDASIKSLADLADIIDTERERGDLTQFDVLAASSISSLCRAVRIISDTTDPNTQLALVENATAMQNNINAILGTNVSIPFLSATRRLLITRRIQEAGAESRSGATPDTIQQLADAELAEIVSEANMFNEMAASQRDIANATREATIREHVLSPVNALANVGMAAAFFRSGGLRSRAFHPTMPTMPGSPAAIGRPMFQAFRGRGHRLNRR.

Positions 109 to 229 constitute a Peptidase C6 domain; the sequence is TAEFKSGFCY…GCEYMLYPVG (121 aa). Residues Cys117 and His189 each act as for helper component proteinase activity in the active site. Positions 502 to 539 are disordered; it reads WVSLDSGDEDDDHSGGGGGSPQTPGGQPPASPAPGTHQ.

This sequence belongs to the bymoviruses polyprotein 2 family. In terms of processing, the viral RNA2 of bymoviruses is expressed as a single polyprotein which undergoes post-translational proteolytic processing resulting in the production of at least two individual proteins. The HC-pro cleaves its C-terminus autocatalytically (Potential).

The enzyme catalyses Hydrolyzes a Gly-|-Gly bond at its own C-terminus, commonly in the sequence -Tyr-Xaa-Val-Gly-|-Gly, in the processing of the potyviral polyprotein.. This is Genome polyprotein 2 (RNA2) from Hordeum vulgare (Barley).